The primary structure comprises 382 residues: D-galactonate dehydratase (382 aa).

D183 serves as a coordination point for Mg(2+). Catalysis depends on H185, which acts as the Proton donor. Mg(2+) contacts are provided by E209 and E235. H285 serves as the catalytic Proton acceptor.

This sequence belongs to the mandelate racemase/muconate lactonizing enzyme family. GalD subfamily. The cofactor is Mg(2+).

The enzyme catalyses D-galactonate = 2-dehydro-3-deoxy-D-galactonate + H2O. It participates in carbohydrate acid metabolism; D-galactonate degradation; D-glyceraldehyde 3-phosphate and pyruvate from D-galactonate: step 1/3. Catalyzes the dehydration of D-galactonate to 2-keto-3-deoxy-D-galactonate. The sequence is that of D-galactonate dehydratase from Salmonella choleraesuis (strain SC-B67).